The chain runs to 306 residues: Probable arylamine N-acetyltransferase 3 (306 aa).

C75 functions as the Acyl-thioester intermediate in the catalytic mechanism. Residues H115 and D130 contribute to the active site.

The protein belongs to the arylamine N-acetyltransferase family.

The enzyme catalyses an arylamine + acetyl-CoA = an N-acetylarylamine + CoA. This chain is Probable arylamine N-acetyltransferase 3, found in Dictyostelium discoideum (Social amoeba).